We begin with the raw amino-acid sequence, 861 residues long: Piwi-like protein 1 (861 aa).

The segment covering 1–13 (MTGRARARARGRA) has biased composition (basic residues). A disordered region spans residues 1–64 (MTGRARARAR…TAGGTAKSQG (64 aa)). Omega-N-methylarginine; by PRMT5; alternate is present on arginine 14. Position 14 is a symmetric dimethylarginine; by PRMT5; alternate (arginine 14). Residues 17–27 (ETAQLVGSTAS) show a composition bias toward polar residues. Arginine 49 carries the post-translational modification Omega-N-methylarginine; by PRMT5. Arginine 53 is modified (omega-N-methylarginine; alternate). Symmetric dimethylarginine; alternate is present on arginine 53. Residues 217–224 (RRLLKIMN) carry the D-box motif. In terms of domain architecture, PAZ spans 278–391 (TVLDFMFNFY…LIPELCYLTG (114 aa)). Positions 316–318 (TYR) are required for binding 2'-O-methylated 3'-end of piRNAs. Position 370 is an omega-N-methylarginine; by PRMT5 (arginine 370). The tract at residues 479–615 (SKETRGAPLI…LQMNCKMGGE (137 aa)) is MID region. Residues 555-847 (IVVCLLSSNR…LAFLVGQSIH (293 aa)) enclose the Piwi domain. Residues aspartate 632, glutamate 670, aspartate 702, and histidine 836 contribute to the active site.

This sequence belongs to the argonaute family. Piwi subfamily. Interacts (via Piwi domain) with DICER1, suggesting that it forms ribonucleoprotein RISC complexes; this interaction is regulated by HSP90AB1 activity. Interacts with MAEL, KIF17, PABPC1, PRMT5 and WDR77. Interacts (when methylated on arginine residues) with TDRD1, TDRKH/TDRD2, RNF17/TDRD4, TDRD6, TDRD7 and TDRD9. Interacts with CLOCK. Interacts with MOV10L1. Interacts with ANAPC10; interaction oly takes place following piRNA-binding. Interacts with RNF8; leading to sequester RNF8 in the cytoplasm. Interacts with TEX19. Mg(2+) serves as cofactor. In terms of processing, arginine methylation by PRMT5 is required for the interaction with Tudor domain-containing protein (TDRD1, TDRKH/TDRD2, RNF17/TDRD4, TDRD6, TDRD7 and TDRD9) and subsequent localization to the meiotic nuage, also named P granule. Ubiquitinated by the anaphase promoting complex/cyclosome (APC/C) in late spermatids, leading to its degradation. Ubiquitination only takes place following piRNA-binding in adult testis. Ubiquitination and degradation in late spermatogenesis by APC/C is probably required to release RNF8 from the cytoplasm and promote histone to protamine exchange by RNF8. In terms of tissue distribution, expressed in spermatocytes and spermatids. Also detected in prostate cancer (at protein level). Detected in most fetal and adult tissues. Expressed in testes, specifically in germline cells; detected in spermatocytes and spermatids during spermatogenesis. Increased expression in testicular tumors originating from embryonic germ cells with retention of germ cells phenotype. No expression in testicular tumors of somatic origin, such as Sertoli cell and Leydig cell tumors. Overexpressed in gastric cancer cells. Isoform 3: Ubiquitously expressed, and specifically in CD34(+) hematopoietic progenitor cells but not in more differentiated cells.

It is found in the cytoplasm. In terms of biological role, endoribonuclease that plays a central role in postnatal germ cells by repressing transposable elements and preventing their mobilization, which is essential for the germline integrity. Acts via the piRNA metabolic process, which mediates the repression of transposable elements during meiosis by forming complexes composed of piRNAs and Piwi proteins and governs the methylation and subsequent repression of transposons. Directly binds methylated piRNAs, a class of 24 to 30 nucleotide RNAs that are generated by a Dicer-independent mechanism and are primarily derived from transposons and other repeated sequence elements. Strongly prefers a uridine in the first position of their guide (g1U preference, also named 1U-bias). Not involved in the piRNA amplification loop, also named ping-pong amplification cycle. Acts as an endoribonuclease that cleaves transposon messenger RNAs. Besides their function in transposable elements repression, piRNAs are probably involved in other processes during meiosis such as translation regulation. Probable component of some RISC complex, which mediates RNA cleavage and translational silencing. Also plays a role in the formation of chromatoid bodies and is required for some miRNAs stability. Required to sequester RNF8 in the cytoplasm until late spermatogenesis; RNF8 being released upon ubiquitination and degradation of PIWIL1. Its function is as follows. May be a negative developmental regulator. This chain is Piwi-like protein 1 (PIWIL1), found in Homo sapiens (Human).